Consider the following 480-residue polypeptide: Major facilitator superfamily domain-containing protein 12 (480 aa).

M1 bears the N-acetylmethionine mark. The Cytoplasmic segment spans residues 1 to 26 (MGPGPPAAGAAPSPRPLSLVARLSYA). The helical transmembrane segment at 27 to 47 (VGHFLNDLCASMWFTYLLLYL) threads the bilayer. Topologically, residues 48 to 56 (HSVRAYSSR) are lumenal. The chain crosses the membrane as a helical span at residues 57 to 77 (GAGLLLLLGQVADGLCTPLVG). The Cytoplasmic segment spans residues 78–97 (YEADRAASCCARYGPRKAWH). Residues 98 to 118 (LVGTVCVLLSFPFIFSPCLGC) traverse the membrane as a helical segment. The Lumenal portion of the chain corresponds to 119-124 (GAATPE). The chain crosses the membrane as a helical span at residues 125–145 (WAALLYYGPFIVIFQFGWAST). At 146–170 (QISHLSLIPELVTNDHEKVELTALR) the chain is on the cytoplasmic side. The chain crosses the membrane as a helical span at residues 171 to 191 (YAFTVVANITVYGAAWLLLHL). Residues 192-218 (QGSSRVEPTQDISISDQLGGQDVPVFR) lie on the Lumenal side of the membrane. The helical transmembrane segment at 219 to 239 (NLSLLVVGVGAVFSLLFHLGT) threads the bilayer. Topologically, residues 240 to 279 (RERRRPHAEEPGEHTPLLAPATAQPLLLWKHWLREPAFYQ) are cytoplasmic. T254 is subject to Phosphothreonine; by MTOR. The helical transmembrane segment at 280-302 (VGILYMTTRLIVNLSQTYMAMYL) threads the bilayer. Topologically, residues 303–310 (TYSLHLPK) are lumenal. A helical membrane pass occupies residues 311–331 (KFIATIPLVMYLSGFLSSFLM). Residues 332–347 (KPINKCIGRNMTYFSG) lie on the Cytoplasmic side of the membrane. 2 helical membrane-spanning segments follow: residues 348–368 (LLVI…GVAV) and 369–389 (YAAA…SLAM). The Cytoplasmic segment spans residues 390-402 (TADLIGPHTNSGA). A helical membrane pass occupies residues 403–423 (FVYGSMSFLDKVANGLAVMAI). At 424-446 (QSLHPCPSELCCRACVSFYHWAM) the chain is on the lumenal side. Residues 447 to 467 (VAVTGGVGVAAALCLCSLLLW) form a helical membrane-spanning segment. Residues 468 to 480 (PTRLRRWDRDARP) lie on the Cytoplasmic side of the membrane.

It belongs to the major facilitator superfamily. In terms of processing, phosphorylation at Thr-254 by MTOR via mTORC1 pathway promotes cysteine transport in lysosomes, thereby regulating lysosomal cysteine and cystine storage and redox homeostasis. As to expression, widely expressed, with high expression in primary melanocytes.

The protein resides in the melanosome membrane. The protein localises to the lysosome membrane. It catalyses the reaction L-cysteine(in) = L-cysteine(out). In terms of biological role, transporter that mediates the import of cysteine into melanosomes, thereby regulating skin pigmentation. In melanosomes, cysteine import is required both for normal levels of cystine, the oxidized dimer of cysteine, and provide cysteine for the production of the cysteinyldopas used in pheomelanin synthesis, thereby regulating skin pigmentation. Also catalyzes import of cysteine into lysosomes in non-pigmented cells, regulating lysosomal cystine and cysteine storage, which is essnetial for redox homeostasis. In Homo sapiens (Human), this protein is Major facilitator superfamily domain-containing protein 12.